The following is a 484-amino-acid chain: MAGPWTFTLLCGLLAATLIQATLSPTAVLILGPKVIKEKLTQELKDHNATSILQQLPLLSAMREKPAGGIPVLGSLVNTVLKHIIWLKVITANILQLQVKPSANDQELLVKIPLDMVAGFNTPLVKTIVEFHMTTEAQATIRMDTSASGPTRLVLSDCATSHGSLRIQLLHKLSFLVNALAKQVMNLLVPSLPNLVKNQLCPVIEASFNGMYADLLQLVKVPISLSIDRLEFDLLYPAIKGDTIQLYLGAKLLDSQGKVTKWFNNSAASLTMPTLDNIPFSLIVSQDVVKAAVAAVLSPEEFMVLLDSVLPESAHRLKSSIGLINEKAADKLGSTQIVKILTQDTPEFFIDQGHAKVAQLIVLEVFPSSEALRPLFTLGIEASSEAQFYTKGDQLILNLNNISSDRIQLMNSGIGWFQPDVLKNIITEIIHSILLPNQNGKLRSGVPVSLVKALGFEAAESSLTKDALVLTPASLWKPSSPVSQ.

The signal sequence occupies residues 1–21 (MAGPWTFTLLCGLLAATLIQA). N-linked (GlcNAc...) asparagine glycosylation occurs at N48. C158 and C201 form a disulfide bridge. 2 N-linked (GlcNAc...) asparagine glycosylation sites follow: N264 and N401.

It belongs to the BPI/LBP/Plunc superfamily. Plunc family. In terms of tissue distribution, detected in duodenum mucosal crypts of cholera patients, near Paneth cells (at protein level). Detected in trachea, nasal septal epithelium and lung.

It localises to the secreted. In terms of biological role, may play a role in innate immunity in mouth, nose and lungs. Binds bacterial lipopolysaccharide (LPS) and modulates the cellular responses to LPS. The chain is BPI fold-containing family B member 1 (BPIFB1) from Homo sapiens (Human).